The primary structure comprises 334 residues: Phosphate acyltransferase (334 aa).

It belongs to the PlsX family. As to quaternary structure, homodimer. Probably interacts with PlsY.

Its subcellular location is the cytoplasm. The catalysed reaction is a fatty acyl-[ACP] + phosphate = an acyl phosphate + holo-[ACP]. It functions in the pathway lipid metabolism; phospholipid metabolism. Its function is as follows. Catalyzes the reversible formation of acyl-phosphate (acyl-PO(4)) from acyl-[acyl-carrier-protein] (acyl-ACP). This enzyme utilizes acyl-ACP as fatty acyl donor, but not acyl-CoA. The chain is Phosphate acyltransferase from Caldicellulosiruptor bescii (strain ATCC BAA-1888 / DSM 6725 / KCTC 15123 / Z-1320) (Anaerocellum thermophilum).